A 298-amino-acid polypeptide reads, in one-letter code: GTPase Era (298 aa).

The Era-type G domain occupies 4–171 (KSGFVSVIGR…LKEALDYIPE (168 aa)). Residues 12–19 (GRPNVGKS) form a G1 region. GTP is bound at residue 12-19 (GRPNVGKS). Residues 38 to 42 (QTTRN) form a G2 region. Residues 59 to 62 (DTPG) are G3. GTP is bound by residues 59–63 (DTPGI) and 121–124 (NKVD). A G4 region spans residues 121–124 (NKVD). Residues 150 to 152 (ISA) are G5. The 78-residue stretch at 202-279 (LDDEVPHGVG…FLELWVKVKP (78 aa)) folds into the KH type-2 domain.

It belongs to the TRAFAC class TrmE-Era-EngA-EngB-Septin-like GTPase superfamily. Era GTPase family. In terms of assembly, monomer.

It localises to the cytoplasm. It is found in the cell membrane. In terms of biological role, an essential GTPase that binds both GDP and GTP, with rapid nucleotide exchange. Plays a role in 16S rRNA processing and 30S ribosomal subunit biogenesis and possibly also in cell cycle regulation and energy metabolism. This Ruminiclostridium cellulolyticum (strain ATCC 35319 / DSM 5812 / JCM 6584 / H10) (Clostridium cellulolyticum) protein is GTPase Era.